We begin with the raw amino-acid sequence, 614 residues long: Fem-3 mRNA-binding factor 1 (614 aa).

The span at 1-24 (MDQSKMRYTNQFRKTPQKPTSTEV) shows a compositional bias: polar residues. The disordered stretch occupies residues 1–34 (MDQSKMRYTNQFRKTPQKPTSTEVGNHHTPAHSP). A PUM-HD domain is found at 160–564 (TRSNNVLPTW…KMIETLAHLR (405 aa)). 8 Pumilio repeats span residues 185–223 (EVLDSGDLMKFAVDKTGCQFLEKAVKGSLTSYQKFQLFE), 224–263 (QVIGRKDDFLKLSTNIFGNYFVQEIIGMSLTTYDDDNIKR), 269–305 (NFISSQMTDMCLDKFACRVIQSSLQNMDLSLACKLVQ), 306–342 (ALPRDARLIAICVDQNANHVIQKVVAVIPLKNWEFIV), 343–382 (DFVATPEHLRQICFDKYGCRVVQTIIEKLTADSINVDLTS), 398–434 (SVTNRCQELATNEYANYIIQHIVSNDDLAVYRECIIE), 436–471 (CLMRNLLSLSQEKFASHVVEKAFLHAPMELLAEMMD), and 483–519 (TGKDALDIMMFHQFGNYVVQCMLTICCDAVSGRRQTK). The interval 283–614 (FACRVIQSSL…NLRLMRTFSP (332 aa)) is binding to gld-3 isoform A.

As to quaternary structure, interacts (via C-terminus) with gld-3 isoform A in an RNA-independent manner. Expressed specifically in the germline (at protein level).

Its subcellular location is the cytoplasm. Functionally, RNA-binding protein that binds to the consensus sequence 5'-UGUGCCAUA-3' in mRNA 3'-UTRs. Involved in the control of stem cells and sex determination in the C.elegans hermaphrodite germline. May also play a role in the hermaphrodite germline proliferation and oogenesis. Binds specifically to the regulatory region of fem-3 3'-UTR and mediates the sperm/oocyte switch. Negatively regulates gld-3 expression, possibly by directly binding to two sites within the 3'-UTR of gld-3 isoform b. In association with the cye-1/cdk-2 complex, negatively regulates gld-1 expression in the distal germline cells of the mitotic zone. By binding to the 3'-UTR, represses phosphatase lip-1 expression in the distal part of the germline mitotic zone. Suppresses germline tumor formation by preventing the dedifferentiation of secondary spermatocytes. The polypeptide is Fem-3 mRNA-binding factor 1 (fbf-1) (Caenorhabditis elegans).